The chain runs to 346 residues: Putative serine/threonine-protein kinase K06H7.1 (346 aa).

The region spanning 20-287 (YKVVQKLGEG…KLFKLLEDVM (268 aa)) is the Protein kinase domain. Residues 26–34 (LGEGGCGSV) and K50 contribute to the ATP site. D141 acts as the Proton acceptor in catalysis. The segment at 302–326 (PEKKKNPASQGNKFGLGKKGTKESG) is disordered.

The protein belongs to the protein kinase superfamily. Ser/Thr protein kinase family.

The catalysed reaction is L-seryl-[protein] + ATP = O-phospho-L-seryl-[protein] + ADP + H(+). It carries out the reaction L-threonyl-[protein] + ATP = O-phospho-L-threonyl-[protein] + ADP + H(+). This chain is Putative serine/threonine-protein kinase K06H7.1, found in Caenorhabditis elegans.